The following is a 130-amino-acid chain: Small ribosomal subunit protein uS9 (130 aa).

The protein belongs to the universal ribosomal protein uS9 family.

The sequence is that of Small ribosomal subunit protein uS9 from Burkholderia pseudomallei (strain K96243).